A 337-amino-acid chain; its full sequence is Anaerobic sulfite reductase subunit C (337 aa).

[4Fe-4S] cluster-binding residues include Cys115, Cys121, Cys153, Cys157, Cys180, Cys183, Cys186, Cys190, Cys212, Cys215, Cys218, and Cys222. Cys157 contacts siroheme. 2 4Fe-4S ferredoxin-type domains span residues 171-200 and 203-232; these read AKMR…CLAL and GKAV…RKPD.

Belongs to the nitrite and sulfite reductase 4Fe-4S domain family. In terms of assembly, the anaerobic sulfite reductase seems to consist of three subunits. The cofactor is [4Fe-4S] cluster. It depends on siroheme as a cofactor.

It localises to the cytoplasm. It catalyses the reaction hydrogen sulfide + 3 NAD(+) + 3 H2O = sulfite + 3 NADH + 4 H(+). Its pathway is sulfur metabolism; sulfite reduction. In terms of biological role, this enzyme catalyzes the hydrogen sulfide production from sulfite. It is strictly anaerobic. It is regulated by electron acceptors rather than by cysteine. This Salmonella typhi protein is Anaerobic sulfite reductase subunit C (asrC).